A 155-amino-acid chain; its full sequence is Endoribonuclease YbeY (155 aa).

Zn(2+)-binding residues include His-115, His-119, and His-125.

The protein belongs to the endoribonuclease YbeY family. The cofactor is Zn(2+).

The protein resides in the cytoplasm. Its function is as follows. Single strand-specific metallo-endoribonuclease involved in late-stage 70S ribosome quality control and in maturation of the 3' terminus of the 16S rRNA. The chain is Endoribonuclease YbeY from Polynucleobacter asymbioticus (strain DSM 18221 / CIP 109841 / QLW-P1DMWA-1) (Polynucleobacter necessarius subsp. asymbioticus).